We begin with the raw amino-acid sequence, 659 residues long: MQENLRFASSGDDVKIWDASSMTLVDKFNPHTAPHAISSVCWSSNNNFLVTASSSGDKIVVSSCKCKPVPLLELGEGQKQTCVSLNSTSMYLVSGGLNNTVNIWDLKSKRVHRSLKDHKDEVTCVTYNWNDCYIASGSLSGEIILHSVTTNLSSTPFGHGSNQSIRHLKYSLFKKSLLGSVSDNGIVTLWDVNSQSPYHNFDSTHKAPASGICFSPVNELLFVTVGLDKRIILYDTSSKKLVKTLVADAPLTAVDFMPDGATLAIGSSRGKIYQYDLRMLKSPIKTISAHKTSVQCIAFQYSTVLSKSGLNKGCSNKPTAVNKRTANVSAGGGGAQNPGVVREAATTSIATVPPQPTAAAVGKGAVAPQDKAGLPRSINTDTLSKEAESGKNQDFSNFDDSGKSSLGDMFSPVRDDAVVSKGGDESIGKGDGLDFLPQLNSVFPPRKNPVVSSTSVLHSSPLNVFMGSPGKEENENHDLTAESKKMYLGKQESKDSFKQFAKLISGAETGNLNASPSSNQTRSPEKFEKPEKEIEAQLINEPPGNGSSTPNPKIASSVTAGVAGSLSEKIVDTIGNSRPNAPLSSVQIRFIQNMIQETLDDFREACHRDIVNLQVEMIKQFHMQLNEMHSLLERYSVNEGLVAEIERLREENKRLRAHF.

8 WD repeats span residues 1 to 31 (MQEN…FNPH), 32 to 71 (TAPH…PVPL), 75 to 114 (GEGQ…VHRS), 117 to 156 (DHKD…SSTP), 160 to 200 (GSNQ…PYHN), 204 to 244 (THKA…LVKT), 246 to 285 (VADA…SPIK), and 289 to 332 (AHKT…SAGG). Position 382 is a phosphothreonine; by PLK1 (T382). A disordered region spans residues 383–433 (LSKEAESGKNQDFSNFDDSGKSSLGDMFSPVRDDAVVSKGGDESIGKGDGL). A Phosphoserine modification is found at S411. The span at 413 to 432 (VRDDAVVSKGGDESIGKGDG) shows a compositional bias: basic and acidic residues. At S426 the chain carries Phosphoserine; by PLK1. 2 positions are modified to phosphoserine: S468 and S515. The span at 508 to 522 (ETGNLNASPSSNQTR) shows a compositional bias: polar residues. Residues 508 to 531 (ETGNLNASPSSNQTRSPEKFEKPE) are disordered. Phosphothreonine; by CDK1 is present on T549. A Phosphoserine; by PLK1 modification is found at S636.

Interacts with FAM29A. Interacts with HSPA1A and HSPA1B. Interacts with gamma-tubulin in a HSPA1A/B-dependent manner. In terms of processing, during mitosis, prior phosphorylation on Thr-549 by CDK1 promotes subsequent phosphorylation by PLK1 on Thr-382, Ser-426 and Ser-636. Phosphorylated NEDD1 can interact with gamma-tubulin for targeting the gamma-tubulin ring complex (gTuRC) to the centrosome, an important step for spindle formation.

It is found in the cytoplasm. The protein resides in the cytoskeleton. It localises to the microtubule organizing center. The protein localises to the centrosome. Its function is as follows. Required for mitosis progression. Promotes the nucleation of microtubules from the spindle. This Bos taurus (Bovine) protein is Protein NEDD1 (NEDD1).